The chain runs to 423 residues: Serine--tRNA ligase (423 aa).

230–232 (TAE) contributes to the L-serine binding site. Residue 261 to 263 (RQE) participates in ATP binding. Glu284 contributes to the L-serine binding site. 348 to 351 (EISS) is a binding site for ATP. Position 384 (Ser384) interacts with L-serine.

Belongs to the class-II aminoacyl-tRNA synthetase family. Type-1 seryl-tRNA synthetase subfamily. As to quaternary structure, homodimer. The tRNA molecule binds across the dimer.

The protein resides in the cytoplasm. The enzyme catalyses tRNA(Ser) + L-serine + ATP = L-seryl-tRNA(Ser) + AMP + diphosphate + H(+). It carries out the reaction tRNA(Sec) + L-serine + ATP = L-seryl-tRNA(Sec) + AMP + diphosphate + H(+). Its pathway is aminoacyl-tRNA biosynthesis; selenocysteinyl-tRNA(Sec) biosynthesis; L-seryl-tRNA(Sec) from L-serine and tRNA(Sec): step 1/1. Its function is as follows. Catalyzes the attachment of serine to tRNA(Ser). Is also able to aminoacylate tRNA(Sec) with serine, to form the misacylated tRNA L-seryl-tRNA(Sec), which will be further converted into selenocysteinyl-tRNA(Sec). The chain is Serine--tRNA ligase from Thermoanaerobacter pseudethanolicus (strain ATCC 33223 / 39E) (Clostridium thermohydrosulfuricum).